Consider the following 309-residue polypeptide: Phytoene synthase (309 aa).

It belongs to the phytoene/squalene synthase family. It depends on ATP as a cofactor. Requires Mn(2+) as cofactor. Mg(2+) is required as a cofactor.

It participates in carotenoid biosynthesis; phytoene biosynthesis. In terms of biological role, involved in the biosynthesis of carotenoids. Catalyzes the condensation of two molecules of geranylgeranyl diphosphate (GGPP) to give prephytoene diphosphate (PPPP) and the subsequent rearrangement of the cyclopropylcarbinyl intermediate to yield phytoene. The chain is Phytoene synthase (crtB) from Pseudescherichia vulneris (Escherichia vulneris).